Consider the following 236-residue polypeptide: Phosphoribosylaminoimidazole-succinocarboxamide synthase (236 aa).

This sequence belongs to the SAICAR synthetase family.

The enzyme catalyses 5-amino-1-(5-phospho-D-ribosyl)imidazole-4-carboxylate + L-aspartate + ATP = (2S)-2-[5-amino-1-(5-phospho-beta-D-ribosyl)imidazole-4-carboxamido]succinate + ADP + phosphate + 2 H(+). Its pathway is purine metabolism; IMP biosynthesis via de novo pathway; 5-amino-1-(5-phospho-D-ribosyl)imidazole-4-carboxamide from 5-amino-1-(5-phospho-D-ribosyl)imidazole-4-carboxylate: step 1/2. The chain is Phosphoribosylaminoimidazole-succinocarboxamide synthase from Pseudomonas putida (strain W619).